A 39-amino-acid polypeptide reads, in one-letter code: Large ribosomal subunit protein bL36 (39 aa).

Belongs to the bacterial ribosomal protein bL36 family.

This chain is Large ribosomal subunit protein bL36, found in Limosilactobacillus reuteri (strain DSM 20016) (Lactobacillus reuteri).